Consider the following 215-residue polypeptide: RNA pyrophosphohydrolase (215 aa).

The Nudix hydrolase domain maps to 6–149 (GFRPNVGIIL…KRDVYQLALT (144 aa)). The Nudix box motif lies at 38–59 (GGIKYGETPMQAMYRELHEETG).

It belongs to the Nudix hydrolase family. RppH subfamily. A divalent metal cation serves as cofactor.

Accelerates the degradation of transcripts by removing pyrophosphate from the 5'-end of triphosphorylated RNA, leading to a more labile monophosphorylated state that can stimulate subsequent ribonuclease cleavage. The sequence is that of RNA pyrophosphohydrolase from Burkholderia lata (strain ATCC 17760 / DSM 23089 / LMG 22485 / NCIMB 9086 / R18194 / 383).